A 154-amino-acid polypeptide reads, in one-letter code: SsrA-binding protein (154 aa).

Positions 130-154 (KLHDKRETERRRQDQRDIQRAIKRA) are disordered. The span at 133 to 154 (DKRETERRRQDQRDIQRAIKRA) shows a compositional bias: basic and acidic residues.

This sequence belongs to the SmpB family.

Its subcellular location is the cytoplasm. Its function is as follows. Required for rescue of stalled ribosomes mediated by trans-translation. Binds to transfer-messenger RNA (tmRNA), required for stable association of tmRNA with ribosomes. tmRNA and SmpB together mimic tRNA shape, replacing the anticodon stem-loop with SmpB. tmRNA is encoded by the ssrA gene; the 2 termini fold to resemble tRNA(Ala) and it encodes a 'tag peptide', a short internal open reading frame. During trans-translation Ala-aminoacylated tmRNA acts like a tRNA, entering the A-site of stalled ribosomes, displacing the stalled mRNA. The ribosome then switches to translate the ORF on the tmRNA; the nascent peptide is terminated with the 'tag peptide' encoded by the tmRNA and targeted for degradation. The ribosome is freed to recommence translation, which seems to be the essential function of trans-translation. This Synechococcus elongatus (strain ATCC 33912 / PCC 7942 / FACHB-805) (Anacystis nidulans R2) protein is SsrA-binding protein.